A 332-amino-acid polypeptide reads, in one-letter code: MDLQRTNQDTGTTTLFKVVISNTVNYLPKGVWILRNNTIDSLSIAKQFREIKNNINISHLSRENYWVETPFGKVFHSEVVSEEFMQIFIDKGNKALNNEEMIFACMSEKGWNVSLETVPNLDIPVGSYETQLGLPVGLHPKLHVHLKNLHKPEDECSLQGFMYIPPTLFIDRYELSNIAEMHADNLGHVLGIWGETDLEAPSYKLNGTGSFFWFDIYTDDGLLQKDYIDTIIPLHTRYQSPLKGQTYLKTSLTNPKFFWNCDTEDKVNDFRFLFSSKNKYTLQNDPTTLSISIPIADLSYKHVVEWVTNGVAIFSFFYLLLYLWKRFRYAKD.

The Lumenal portion of the chain corresponds to 1–301 (MDLQRTNQDT…SIPIADLSYK (301 aa)). N-linked (GlcNAc...) asparagine glycans are attached at residues Asn-36, Asn-56, Asn-112, and Asn-206. The helical transmembrane segment at 302 to 324 (HVVEWVTNGVAIFSFFYLLLYLW) threads the bilayer. Over 325–332 (KRFRYAKD) the chain is Cytoplasmic.

It belongs to the PIGX family.

It localises to the endoplasmic reticulum membrane. The protein operates within glycolipid biosynthesis; glycosylphosphatidylinositol-anchor biosynthesis. Functionally, required for proper folding and/or the stability of a subset of proteins in the endoplasmic reticulum. Component of glycosylphosphatidylinositol-mannosyltransferase 1 which transfers the first of the 4 mannoses in the GPI-anchor precursors during GPI-anchor biosynthesis. Probably acts by stabilizing the mannosyltransferase gpi14. The sequence is that of Protein pbn1 (pbn1) from Schizosaccharomyces pombe (strain 972 / ATCC 24843) (Fission yeast).